The primary structure comprises 446 residues: Glutamyl-tRNA reductase (446 aa).

Residues 49-52, Ser107, 112-114, and Gln118 contribute to the substrate site; these read TCNR and EPQ. Cys50 acts as the Nucleophile in catalysis. NADP(+) is bound at residue 187 to 192; it reads GAGETI. The disordered stretch occupies residues 417–446; the sequence is NANEDTRESVDKEQTGTTQGAARGDQRSTG. Positions 420–430 are enriched in basic and acidic residues; sequence EDTRESVDKEQ.

The protein belongs to the glutamyl-tRNA reductase family. Homodimer.

The catalysed reaction is (S)-4-amino-5-oxopentanoate + tRNA(Glu) + NADP(+) = L-glutamyl-tRNA(Glu) + NADPH + H(+). It functions in the pathway porphyrin-containing compound metabolism; protoporphyrin-IX biosynthesis; 5-aminolevulinate from L-glutamyl-tRNA(Glu): step 1/2. Catalyzes the NADPH-dependent reduction of glutamyl-tRNA(Glu) to glutamate 1-semialdehyde (GSA). The protein is Glutamyl-tRNA reductase of Alkalilimnicola ehrlichii (strain ATCC BAA-1101 / DSM 17681 / MLHE-1).